Here is a 383-residue protein sequence, read N- to C-terminus: Chorismate synthase (383 aa).

NADP(+)-binding residues include Arg39 and Arg45. Residues 128 to 130 (RAS), Gly291, 306 to 310 (KPIAT), and Arg332 contribute to the FMN site.

The protein belongs to the chorismate synthase family. Homotetramer. Requires FMNH2 as cofactor.

It carries out the reaction 5-O-(1-carboxyvinyl)-3-phosphoshikimate = chorismate + phosphate. It participates in metabolic intermediate biosynthesis; chorismate biosynthesis; chorismate from D-erythrose 4-phosphate and phosphoenolpyruvate: step 7/7. Its function is as follows. Catalyzes the anti-1,4-elimination of the C-3 phosphate and the C-6 proR hydrogen from 5-enolpyruvylshikimate-3-phosphate (EPSP) to yield chorismate, which is the branch point compound that serves as the starting substrate for the three terminal pathways of aromatic amino acid biosynthesis. This reaction introduces a second double bond into the aromatic ring system. The sequence is that of Chorismate synthase from Thermus thermophilus (strain ATCC 27634 / DSM 579 / HB8).